Reading from the N-terminus, the 371-residue chain is Putative glutamate--cysteine ligase 2 (371 aa).

Belongs to the glutamate--cysteine ligase type 2 family. YbdK subfamily.

The enzyme catalyses L-cysteine + L-glutamate + ATP = gamma-L-glutamyl-L-cysteine + ADP + phosphate + H(+). Functionally, ATP-dependent carboxylate-amine ligase which exhibits weak glutamate--cysteine ligase activity. This Burkholderia lata (strain ATCC 17760 / DSM 23089 / LMG 22485 / NCIMB 9086 / R18194 / 383) protein is Putative glutamate--cysteine ligase 2.